Here is a 240-residue protein sequence, read N- to C-terminus: Ribonuclease HII (240 aa).

Positions 27 to 226 (GPVAGVDEAG…REARSLRLED (200 aa)) constitute an RNase H type-2 domain. Residues Asp-33, Glu-34, and Asp-127 each contribute to the a divalent metal cation site.

It belongs to the RNase HII family. Mn(2+) is required as a cofactor. The cofactor is Mg(2+).

It is found in the cytoplasm. It carries out the reaction Endonucleolytic cleavage to 5'-phosphomonoester.. In terms of biological role, endonuclease that specifically degrades the RNA of RNA-DNA hybrids. The sequence is that of Ribonuclease HII from Frankia casuarinae (strain DSM 45818 / CECT 9043 / HFP020203 / CcI3).